The primary structure comprises 24 residues: 29 kDa outer membrane protein (24 aa).

The protein resides in the cell outer membrane. In terms of biological role, may be involved in transporting molecules across the outer membrane. The polypeptide is 29 kDa outer membrane protein (Acinetobacter baumannii).